A 142-amino-acid polypeptide reads, in one-letter code: Ribosome-binding factor A (142 aa).

Residues 120–130 (EVRRDIDHAPA) are compositionally biased toward basic and acidic residues. The interval 120–142 (EVRRDIDHAPAEDEFPTDGDDGQ) is disordered. Positions 131–142 (EDEFPTDGDDGQ) are enriched in acidic residues.

It belongs to the RbfA family. As to quaternary structure, monomer. Binds 30S ribosomal subunits, but not 50S ribosomal subunits or 70S ribosomes.

It is found in the cytoplasm. In terms of biological role, one of several proteins that assist in the late maturation steps of the functional core of the 30S ribosomal subunit. Associates with free 30S ribosomal subunits (but not with 30S subunits that are part of 70S ribosomes or polysomes). Required for efficient processing of 16S rRNA. May interact with the 5'-terminal helix region of 16S rRNA. The sequence is that of Ribosome-binding factor A from Paramagnetospirillum magneticum (strain ATCC 700264 / AMB-1) (Magnetospirillum magneticum).